The sequence spans 304 residues: UDP-3-O-acyl-N-acetylglucosamine deacetylase (304 aa).

The Zn(2+) site is built by His79, His238, and Asp242. The active-site Proton donor is His265.

Belongs to the LpxC family. Requires Zn(2+) as cofactor.

The enzyme catalyses a UDP-3-O-[(3R)-3-hydroxyacyl]-N-acetyl-alpha-D-glucosamine + H2O = a UDP-3-O-[(3R)-3-hydroxyacyl]-alpha-D-glucosamine + acetate. Its pathway is glycolipid biosynthesis; lipid IV(A) biosynthesis; lipid IV(A) from (3R)-3-hydroxytetradecanoyl-[acyl-carrier-protein] and UDP-N-acetyl-alpha-D-glucosamine: step 2/6. Its function is as follows. Catalyzes the hydrolysis of UDP-3-O-myristoyl-N-acetylglucosamine to form UDP-3-O-myristoylglucosamine and acetate, the committed step in lipid A biosynthesis. The sequence is that of UDP-3-O-acyl-N-acetylglucosamine deacetylase from Pseudoalteromonas atlantica (strain T6c / ATCC BAA-1087).